Here is a 67-residue protein sequence, read N- to C-terminus: MDTRLMDLLVCPLCKGPLAHDHATHELVCKADRLAFPIRDGIAVMLESQARSIDQPAAESAPADLSS.

This sequence belongs to the UPF0434 family.

This chain is UPF0434 protein Lcho_2556, found in Leptothrix cholodnii (strain ATCC 51168 / LMG 8142 / SP-6) (Leptothrix discophora (strain SP-6)).